Reading from the N-terminus, the 38-residue chain is Photosystem II reaction center protein X 1 (38 aa).

The helical transmembrane segment at 8-28 (FLWSLLYGAVVLGLLFGAIVF) threads the bilayer.

The protein belongs to the PsbX family. Type 1 subfamily. PSII is composed of 1 copy each of membrane proteins PsbA, PsbB, PsbC, PsbD, PsbE, PsbF, PsbH, PsbI, PsbJ, PsbK, PsbL, PsbM, PsbT, PsbX, PsbY, PsbZ, Psb30/Ycf12, peripheral proteins PsbO, CyanoQ (PsbQ), PsbU, PsbV and a large number of cofactors. It forms dimeric complexes.

The protein resides in the cellular thylakoid membrane. Involved in the binding and/or turnover of quinones at the Q(B) site of photosystem II (PSII). PSII is a light-driven water plastoquinone oxidoreductase, using light energy to abstract electrons from H(2)O, generating a proton gradient subsequently used for ATP formation. This is Photosystem II reaction center protein X 1 from Synechococcus sp. (strain JA-3-3Ab) (Cyanobacteria bacterium Yellowstone A-Prime).